The primary structure comprises 185 residues: Ribosome-recycling factor (185 aa).

Belongs to the RRF family.

Its subcellular location is the cytoplasm. Its function is as follows. Responsible for the release of ribosomes from messenger RNA at the termination of protein biosynthesis. May increase the efficiency of translation by recycling ribosomes from one round of translation to another. The sequence is that of Ribosome-recycling factor from Legionella pneumophila (strain Paris).